The sequence spans 773 residues: Circadian clock protein PASD1 (773 aa).

The PAS domain maps to 30–102 (YDYFNQVTLQ…IILKFPLLNS (73 aa)). The segment at 313–361 (SVDQEGPMDQQDPENPVAPLDQAGLMDPVDPEDSVDLGAAGASAQPLQP) is disordered. The necessary for transcriptional repression stretch occupies residues 365–412 (VAYDIISQELELMKKLKEQLEERTWLLHDAIQNQQNALELMMDHLQKQ). Residues 365 to 412 (VAYDIISQELELMKKLKEQLEERTWLLHDAIQNQQNALELMMDHLQKQ) adopt a coiled-coil conformation. Disordered stretches follow at residues 427 to 448 (SEAV…PLPH), 506 to 569 (QRKV…QLQE), and 732 to 773 (GVEG…NKPC). Positions 475–553 (VAFNQQQLVQ…QERKKWQGQM (79 aa)) form a coiled coil. Residues 506 to 536 (QRKVQKQKKMQEKKKLQEQKMQEKKKLQEQR) show a composition bias toward basic and acidic residues.

As to quaternary structure, interacts with the CLOCK-BMAL1 heterodimer; this interaction inhibits CLOCK-BMAL1 transcriptional activation and suppress circadian timekeeping. Interacts with BMAL1. In terms of tissue distribution, testis-specific. Expressed in a broad range of cancer cells, including melanoma, lung cancer, and breast cancer (at protein level). Testis-specific. Found in histologically normal tissues from patients with uterus, lung and small intestine cancers. Widespread expression seen in solid tumors and diffuse large B-cell lymphoma (DLBCL)-derived cell lines. Isoform 2 is expressed in all DLBCL-derived cell lines, while isoform 1 is preferentially expressed in cell lines derived from non-germinal center DLBCL.

It localises to the nucleus. Its function is as follows. Functions as a suppressor of the biological clock that drives the daily circadian rhythms of cells throughout the body. Acts as a nuclear repressor of the CLOCK-BMAL1 heterodimer-mediated transcriptional activation of the core clock components. Inhibits circadian clock function in cancer cells, when overexpressed. The sequence is that of Circadian clock protein PASD1 from Homo sapiens (Human).